Here is a 288-residue protein sequence, read N- to C-terminus: Octanoyl-[GcvH]:protein N-octanoyltransferase (288 aa).

The BPL/LPL catalytic domain occupies 44-253; sequence AGGPPTFRLW…VLESAMGPQV (210 aa). Cysteine 148 (acyl-thioester intermediate) is an active-site residue. The disordered stretch occupies residues 269 to 288; the sequence is GREGASETDPRRVAYGVDRP. A compositionally biased stretch (basic and acidic residues) spans 272-288; it reads GASETDPRRVAYGVDRP.

Belongs to the octanoyltransferase LipL family.

The catalysed reaction is N(6)-octanoyl-L-lysyl-[glycine-cleavage complex H protein] + L-lysyl-[lipoyl-carrier protein] = N(6)-octanoyl-L-lysyl-[lipoyl-carrier protein] + L-lysyl-[glycine-cleavage complex H protein]. It participates in protein modification; protein lipoylation via endogenous pathway; protein N(6)-(lipoyl)lysine from octanoyl-[acyl-carrier-protein]. Its function is as follows. Catalyzes the amidotransfer (transamidation) of the octanoyl moiety from octanoyl-GcvH to the lipoyl domain of the E2 subunit of lipoate-dependent enzymes. The sequence is that of Octanoyl-[GcvH]:protein N-octanoyltransferase from Kyrpidia tusciae (strain DSM 2912 / NBRC 15312 / T2) (Bacillus tusciae).